The following is a 518-amino-acid chain: Cytokinin hydroxylase (518 aa).

Residues 1 to 21 (MLLTILKSLLVIFVTTILRVL) traverse the membrane as a helical segment. C464 is a binding site for heme.

It belongs to the cytochrome P450 family. The cofactor is heme. Expressed in roots and flowers.

It localises to the membrane. It catalyses the reaction N(6)-(dimethylallyl)adenosine 5'-phosphate + NADPH + O2 + H(+) = 9-ribosyl-trans-zeatin 5'-phosphate + NADP(+) + H2O. The enzyme catalyses N(6)-(dimethylallyl)adenosine 5'-diphosphate + NADPH + O2 + H(+) = 9-ribosyl-trans-zeatin 5'-diphosphate + NADP(+) + H2O. The catalysed reaction is N(6)-(dimethylallyl)adenosine 5'-triphosphate + NADPH + O2 + H(+) = 9-ribosyl-trans-zeatin 5'-triphosphate + NADP(+) + H2O. In terms of biological role, cytokinin hydroxylase that catalyzes the biosynthesis of trans-zeatin via the isopentenyladenine riboside 5'-monophosphate (iPRMP)-dependent pathway. Can use isopentenyladenosine-5'-monophosphate, isopentenyladenosine-5'-diphosphate and isopentenyladenosine-5'-triphosphate as substrate. The protein is Cytokinin hydroxylase (CYP735A1) of Arabidopsis thaliana (Mouse-ear cress).